The following is a 375-amino-acid chain: DNA replication and repair protein RecF (375 aa).

30-37 (GENAQGKT) is a binding site for ATP.

Belongs to the RecF family.

Its subcellular location is the cytoplasm. Functionally, the RecF protein is involved in DNA metabolism; it is required for DNA replication and normal SOS inducibility. RecF binds preferentially to single-stranded, linear DNA. It also seems to bind ATP. This is DNA replication and repair protein RecF from Latilactobacillus sakei subsp. sakei (strain 23K) (Lactobacillus sakei subsp. sakei).